The following is a 117-amino-acid chain: Thioredoxin (117 aa).

Residues 2–116 (AISLTEEDFV…FENIIKDFFG (115 aa)) enclose the Thioredoxin domain. An intrachain disulfide couples C40 to C43.

The protein belongs to the thioredoxin family.

Participates in various redox reactions through the reversible oxidation of its active center dithiol to a disulfide and catalyzes dithiol-disulfide exchange reactions. This chain is Thioredoxin (trxA), found in Borreliella burgdorferi (strain ATCC 35210 / DSM 4680 / CIP 102532 / B31) (Borrelia burgdorferi).